Consider the following 711-residue polypeptide: Ubiquitin carboxyl-terminal hydrolase BAP1 (711 aa).

One can recognise a UCH catalytic domain in the interval 4-234 (GWLELESDPG…ARLHVLKVNR (231 aa)). The Arg-finger motif signature appears at 56–60 (RRSRR). Residue Cys-91 is the Nucleophile of the active site. The active-site Proton donor is His-169. The disordered stretch occupies residues 255-337 (THKSQESQLP…VPPNPTPIVQ (83 aa)). Positions 269–278 (PASSKSPLAL) are enriched in low complexity. Ser-274 bears the Phosphoserine mark. Residues 345–348 (NHNY) carry the HBM-like motif motif. 2 positions are modified to phosphoserine: Ser-351 and Ser-377. Disordered regions lie at residues 354–420 (QEEE…GQLS) and 446–506 (SIKT…SPVT). Acidic residues predominate over residues 377-391 (SDDEDDYEDEEEDDA). Over residues 462–506 (THSQPSPTPSNESTDTASEIGSAFNSPLRSPIRSANPTRPSSPVT) the composition is skewed to polar residues. Position 475 is a phosphothreonine (Thr-475). Phosphoserine is present on residues Ser-503, Ser-519, Ser-567, and Ser-579. Residues 557-605 (LTESGKGSSPSIRPSQGSQGSGSPEEKEVVEAVDSREKPGLVRPSESLN) are disordered. The segment covering 563–579 (GSSPSIRPSQGSQGSGS) has biased composition (low complexity). The interval 578-703 (GSPEEKEVVE…QRKPDRRKRS (126 aa)) is interaction with BRCA1. A compositionally biased stretch (basic and acidic residues) spans 580–596 (PEEKEVVEAVDSREKPG). The stretch at 612–643 (KELLALLKCVEAEIANYEACLKEEVEKRKKFK) forms a coiled coil. Residues 624-668 (EIANYEACLKEEVEKRKKFKIDDQRRTHNYDEFICTFISMLAQEG) are interaction with YY1. The region spanning 652 to 680 (NYDEFICTFISMLAQEGMLANLVEQNISV) is the ULD domain. Residues 681 to 683 (RRR) form an interaction with nucleosomal DNA forming a DNA clamp with ASXL1 region. The Classical bipartite Nuclear localization signal (NLS) signature appears at 681 to 704 (RRRQGVSIGRLHKQRKPDRRKRSR). The segment at 685–711 (GVSIGRLHKQRKPDRRKRSRPYKAKRQ) is disordered. A positively charged C-terminal extension (CTE) region spans residues 695–711 (RKPDRRKRSRPYKAKRQ). Residues 699–704 (RRKRSR) carry the Nuclear localization signal motif. The Non-classical PY-nuclear localization signal (PY-NLS) signature appears at 699–706 (RRKRSRPY).

This sequence belongs to the peptidase C12 family. BAP1 subfamily. In terms of assembly, core component of the polycomb repressive deubiquitinase (PR-DUB) complex, at least composed of BAP1, one of ASXL1, ASXL2 or (probably) ASXL3, and one of MBD5 or MBD6. The PR-DUB core associates with a number of accessory proteins, including FOXK1, FOXK2, KDM1B, HCFC1, YY1 and OGT; KDM1B specifically associates with ASXL2 PR-DUB complexes. The BAP1 deubiquitinase activity is not required for PR-DUB assembly. Homodimerizes (via coiled-coil hinge-region between the UCH and ULD domains) to mediate assembly of 2 copies of the BAP1-ASXL heterodimer into a bisymmetric tetramer; dimerization enhances association with nucleosomes. The PR-DUB complex associates with nucleosomes to mediate deubiquitination of 'lys-120' of histone H2AK118ub1 substrates; the association requires the positively charged C-terminal tail of BAP1. Interacts (via ULD domain) with ASXL1 (via DEUBAD domain); the interaction is direct and forms a ubiquitin binding cleft. The interaction with ASXL1 stabilizes BAP1 but is not required for nucleosome binding. Associates (via C-terminus) with nucleosome and chromatosome complexes through direct interaction with DNA and the histone3/4 dimer; this association displaces the histone-2A C-terminal tail, extending and orienting the H2AK118ub1 substrate towards the BAP1 deubiquitinase active site. Also interacts (via arginine finger) directly with the histone H2A-H2B acidic patch; this interaction is not critical for nucleosome-chromatosome association but may play a role in orienting the H2AK118ub1 substrate towards the PR-DUB complex active site. Interacts with BRCA1 (via the RING finger). Interacts (via HBM-like motif) with HCFC1. Interacts (via a C-terminal region overlapping the ULD domain) with YY1; the interaction is direct and requires the interaction with HCFC1. Interacts (when phosphorylated at Thr-475) with FOXK1. Interacts (when phosphorylated at Thr-475) with FOXK2; leading to recruitment of the PR-DUB complex and repression of FOXK2 target genes. Interacts (via non-classical PY-NLS) with TNPO1/transportin-1 (via HEAT repeats 8-12); the interaction is direct, mediates BAP1 nuclear localization and disrupts BAP1 homodimerization. Interacts (via C-terminus) with KPNA1/importin alpha5 and KPNA2/importin alpha1; these interactions can contribute to BAP1 nuclear localization but are less important than the interaction with TNPO1/transportin-1. The interaction with TNPO1/transportin-1 disrupts homodimerization and blocks ubiquitination by UBE2O. Post-translationally, ubiquitinated: monoubiquitinated at multiple sites within its nuclear localization signal (NLS) BY UBE2O, leading to cytoplasmic retention. Able to mediate autodeubiquitination via intramolecular interactions to counteract cytoplasmic retention. Monoubiquitinated on at least 4 sites near or within its PY-NLS.

The protein resides in the cytoplasm. The protein localises to the nucleus. Its subcellular location is the chromosome. The catalysed reaction is Thiol-dependent hydrolysis of ester, thioester, amide, peptide and isopeptide bonds formed by the C-terminal Gly of ubiquitin (a 76-residue protein attached to proteins as an intracellular targeting signal).. Functionally, deubiquitinating enzyme that plays a key role in chromatin by mediating deubiquitination of histone H2A and HCFC1. Catalytic component of the polycomb repressive deubiquitinase (PR-DUB) complex, a complex that specifically mediates deubiquitination of histone H2A monoubiquitinated at 'Lys-120' (H2AK119ub1). Does not deubiquitinate monoubiquitinated histone H2B. The PR-DUB complex is an epigenetic regulator of gene expression and acts as a transcriptional coactivator, affecting genes involved in development, cell communication, signaling, cell proliferation and cell viability. Antagonizes PRC1 mediated H2AK119ub1 monoubiquitination. As part of the PR-DUB complex, associates with chromatin enriched in histone marks H3K4me1, H3K4me3, and H3K27Ac, but not in H3K27me3. Acts as a regulator of cell growth by mediating deubiquitination of HCFC1 N-terminal and C-terminal chains, with some specificity toward 'Lys-48'-linked polyubiquitin chains compared to 'Lys-63'-linked polyubiquitin chains. Deubiquitination of HCFC1 does not lead to increase stability of HCFC1. Interferes with the BRCA1 and BARD1 heterodimer activity by inhibiting their ability to mediate ubiquitination and autoubiquitination. It however does not mediate deubiquitination of BRCA1 and BARD1. Able to mediate autodeubiquitination via intramolecular interactions to counteract monoubiquitination at the nuclear localization signal (NLS), thereby protecting it from cytoplasmic sequestration. Negatively regulates epithelial-mesenchymal transition (EMT) of trophoblast stem cells during placental development by regulating genes involved in epithelial cell integrity, cell adhesion and cytoskeletal organization. This is Ubiquitin carboxyl-terminal hydrolase BAP1 (BAP1) from Bos taurus (Bovine).